Here is a 156-residue protein sequence, read N- to C-terminus: Small ribosomal subunit protein uS7 (156 aa).

The protein belongs to the universal ribosomal protein uS7 family. As to quaternary structure, part of the 30S ribosomal subunit. Contacts proteins S9 and S11.

Functionally, one of the primary rRNA binding proteins, it binds directly to 16S rRNA where it nucleates assembly of the head domain of the 30S subunit. Is located at the subunit interface close to the decoding center, probably blocks exit of the E-site tRNA. The polypeptide is Small ribosomal subunit protein uS7 (Dechloromonas aromatica (strain RCB)).